Reading from the N-terminus, the 261-residue chain is Class II histocompatibility antigen, M alpha chain (261 aa).

Positions M1–A26 are cleaved as a signal peptide. Residues V27 to R124 form an alpha-1 region. Residues V27 to A231 are Lumenal-facing. N41 carries N-linked (GlcNAc...) asparagine glycosylation. 2 disulfide bridges follow: C50/C105 and C147/C202. The region spanning P114–A215 is the Ig-like C1-type domain. The segment at G125–W217 is alpha-2. Positions V218–A231 are connecting peptide. A helical transmembrane segment spans residues L232–L252. The Cytoplasmic portion of the chain corresponds to C253 to D261.

The protein belongs to the MHC class II family. In terms of assembly, heterodimer of an alpha chain (DMA) and a beta chain (DMB). Interacts with MHCII; this interaction mediates rapid selection of high-affinity peptides.

The protein resides in the late endosome membrane. Its subcellular location is the lysosome membrane. Functionally, plays a critical role in catalyzing the release of class II-associated invariant chain peptide (CLIP) from newly synthesized MHC class II molecules and freeing the peptide binding site for acquisition of antigenic peptides. In Mus musculus (Mouse), this protein is Class II histocompatibility antigen, M alpha chain (H2-DMa).